Here is a 382-residue protein sequence, read N- to C-terminus: D-galactonate dehydratase (382 aa).

Residue Asp183 coordinates Mg(2+). The active-site Proton donor is the His185. Residues Glu209 and Glu235 each coordinate Mg(2+). His285 (proton acceptor) is an active-site residue. Positions 361-382 are disordered; the sequence is NENPPDWRNPVWRHSDGSIAEW.

Belongs to the mandelate racemase/muconate lactonizing enzyme family. GalD subfamily. Mg(2+) is required as a cofactor.

The enzyme catalyses D-galactonate = 2-dehydro-3-deoxy-D-galactonate + H2O. The protein operates within carbohydrate acid metabolism; D-galactonate degradation; D-glyceraldehyde 3-phosphate and pyruvate from D-galactonate: step 1/3. Functionally, catalyzes the dehydration of D-galactonate to 2-keto-3-deoxy-D-galactonate. The polypeptide is D-galactonate dehydratase (Xanthomonas oryzae pv. oryzae (strain MAFF 311018)).